The primary structure comprises 242 residues: Required for respiratory growth protein 7, mitochondrial (242 aa).

It belongs to the RRG7 family.

It localises to the mitochondrion. This chain is Required for respiratory growth protein 7, mitochondrial (RRG7), found in Zygosaccharomyces rouxii (strain ATCC 2623 / CBS 732 / NBRC 1130 / NCYC 568 / NRRL Y-229).